A 449-amino-acid polypeptide reads, in one-letter code: Exodeoxyribonuclease 7 large subunit (449 aa).

Belongs to the XseA family. As to quaternary structure, heterooligomer composed of large and small subunits.

It is found in the cytoplasm. It catalyses the reaction Exonucleolytic cleavage in either 5'- to 3'- or 3'- to 5'-direction to yield nucleoside 5'-phosphates.. Bidirectionally degrades single-stranded DNA into large acid-insoluble oligonucleotides, which are then degraded further into small acid-soluble oligonucleotides. In Latilactobacillus sakei subsp. sakei (strain 23K) (Lactobacillus sakei subsp. sakei), this protein is Exodeoxyribonuclease 7 large subunit.